Reading from the N-terminus, the 317-residue chain is UAP56-interacting factor (317 aa).

The residue at position 1 (methionine 1) is an N-acetylmethionine. The disordered stretch occupies residues 1–23 (MNRFGTRLVGATATTPPAPKARS). A Phosphothreonine modification is found at threonine 14. A Phosphoserine modification is found at serine 23. Positions 26–44 (NLDKIDMSLDEIIKLNRKE) match the UAP56-binding motif motif. Phosphoserine occurs at positions 60 and 117. A Glycyl lysine isopeptide (Lys-Gly) (interchain with G-Cter in SUMO1) cross-link involves residue lysine 139. Lysine 260 participates in a covalent cross-link: Glycyl lysine isopeptide (Lys-Gly) (interchain with G-Cter in SUMO2).

It belongs to the UIF family. In terms of assembly, interacts with DDX39B/UAP56 and NXF1; interaction with DDX39B/UAP56 and NXF1 are mutually exclusive. Interacts with SSRP1; required for its recruitment to mRNAs. Interacts with CHTOP.

Its subcellular location is the nucleus. The protein resides in the nucleoplasm. It localises to the nucleus speckle. Required for mRNA export from the nucleus to the cytoplasm. Acts as an adapter that uses the DDX39B/UAP56-NFX1 pathway to ensure efficient mRNA export and delivering to the nuclear pore. Associates with spliced and unspliced mRNAs simultaneously with ALYREF/THOC4. The polypeptide is UAP56-interacting factor (Fyttd1) (Rattus norvegicus (Rat)).